The following is a 704-amino-acid chain: Meprin A subunit beta (704 aa).

A signal peptide spans methionine 1–glycine 20. A propeptide spanning residues leucine 21 to serine 64 is cleaved from the precursor. Topologically, residues leucine 21–aspartate 654 are extracellular. Residues asparagine 63–threonine 257 form the Peptidase M12A domain. Cystine bridges form between cysteine 104-cysteine 256, cysteine 125-cysteine 145, and cysteine 266-cysteine 428. Histidine 153 serves as a coordination point for Zn(2+). Glutamate 154 is a catalytic residue. The Zn(2+) site is built by histidine 157 and histidine 163. Asparagine 193, asparagine 219, asparagine 255, asparagine 316, asparagine 422, asparagine 437, asparagine 529, asparagine 548, and asparagine 593 each carry an N-linked (GlcNAc...) asparagine glycan. Positions serine 261–histidine 430 constitute an MAM domain. Residues histidine 431–valine 586 form the MATH domain. The region spanning valine 607–glutamate 647 is the EGF-like domain. 3 disulfides stabilise this stretch: cysteine 611–cysteine 622, cysteine 616–cysteine 631, and cysteine 633–cysteine 646. The chain crosses the membrane as a helical span at residues threonine 655 to valine 678. Residues tyrosine 679–phenylalanine 704 lie on the Cytoplasmic side of the membrane. Threonine 697 carries the phosphothreonine modification.

In terms of assembly, homotetramer consisting of disulfide-linked beta subunits, or heterotetramer of two alpha and two beta subunits formed by non-covalent association of two disulfide-linked heterodimers. Interacts with MBL2 through its carbohydrate moiety. This interaction may inhibit its catalytic activity. Interacts with TSPAN8. Requires Zn(2+) as cofactor. Proteolytically activated by trypsin in the intestinal lumen and kallikrein-related peptidases in other tissues. In terms of processing, N-glycosylated; contains high mannose and/or complex biantennary structures. Post-translationally, phosphorylated by PKC at multiple sites of its cytoplasmic part. Phosphorylation dcreases activity at the cell surface, leading to diminished substrate cleavage. In terms of tissue distribution, isoform 1 is expressed in kidney, intestinal brush borders, and salivary ducts. Isoform 2 has been found in carcinoma cells.

Its subcellular location is the cell membrane. The protein localises to the secreted. It carries out the reaction Hydrolysis of proteins, including azocasein, and peptides. Hydrolysis of 5-His-|-Leu-6, 6-Leu-|-Cys-7, 14-Ala-|-Leu-15 and 19-Cys-|-Gly-20 bonds in insulin B chain.. With respect to regulation, strongly inhibited by fetuin-A/AHSG. Inhibited by cysteine and by the metal ion chelators EDTA and 1,10-phenanthroline. Not inhibited by 3,4-dichloroisocourmarin, soybean trypsin inhibitor, or the cysteine proteinase inhibitors iodoacetic acid and E-64. In terms of biological role, membrane metallopeptidase that sheds many membrane-bound proteins. Exhibits a strong preference for acidic amino acids at the P1' position. Known substrates include: FGF19, VGFA, IL1B, IL18, procollagen I and III, E-cadherin, KLK7, gastrin, ADAM10, tenascin-C. The presence of several pro-inflammatory cytokine among substrates implicate MEP1B in inflammation. It is also involved in tissue remodeling due to its capability to degrade extracellular matrix components. The sequence is that of Meprin A subunit beta (Mep1b) from Mus musculus (Mouse).